The chain runs to 207 residues: Melanocortin-2 receptor accessory protein 2 (207 aa).

Positions 1 to 21 (MEMSAQRLASNRTSPQSPSNS) are disordered. Residues 7–21 (RLASNRTSPQSPSNS) are compositionally biased toward polar residues. N-linked (GlcNAc...) asparagine glycosylation occurs at N11. The helical transmembrane segment at 47–67 (IVIGFWVGLAVFVIFMFFVLT) threads the bilayer. S91 is subject to Phosphoserine.

The protein belongs to the MRAP family. In terms of assembly, homodimer and heterodimer. Forms antiparallel homodimers and heterodimers with MRAP. Interacts with MC1R, MC2R, MC3R and MC5R. Interacts with MC4R. As to expression, predominantly expressed in the brain, mainly in the pons and cerebellum but also in regions involved in energy homeostasis, such as the hypothalamus and brainstem.

The protein resides in the cell membrane. The protein localises to the endoplasmic reticulum membrane. Functionally, modulator of melanocortin receptor 4 (MC4R), a receptor involved in energy homeostasis. Plays a central role in the control of energy homeostasis and body weight regulation by increasing ligand-sensitivity of MC4R and MC4R-mediated generation of cAMP. May also act as a negative regulator of MC2R: competes with MRAP for binding to MC2R and impairs the binding of corticotropin (ACTH) to MC2R. May also regulate activity of other melanocortin receptors (MC1R, MC3R and MC5R); however, additional evidence is required in vivo. The sequence is that of Melanocortin-2 receptor accessory protein 2 (Mrap2) from Mus musculus (Mouse).